We begin with the raw amino-acid sequence, 659 residues long: UvrABC system protein B (659 aa).

In terms of domain architecture, Helicase ATP-binding spans 25-182 (QSIENGNRGQ…KKLIEIQYER (158 aa)). 38–45 (GVTGSGKT) provides a ligand contact to ATP. Residues 91-114 (YYDYYQPEAYVPQTDTFIEKDASI) carry the Beta-hairpin motif. Residues 429–582 (QIDDLYGEIQ…QMEYNEEHNI (154 aa)) form the Helicase C-terminal domain. The UVR domain occupies 622–657 (EKLIEQYEEEMKEAAKNLQFERAAELRDIIKDLKEN).

The protein belongs to the UvrB family. In terms of assembly, forms a heterotetramer with UvrA during the search for lesions. Interacts with UvrC in an incision complex.

The protein localises to the cytoplasm. Functionally, the UvrABC repair system catalyzes the recognition and processing of DNA lesions. A damage recognition complex composed of 2 UvrA and 2 UvrB subunits scans DNA for abnormalities. Upon binding of the UvrA(2)B(2) complex to a putative damaged site, the DNA wraps around one UvrB monomer. DNA wrap is dependent on ATP binding by UvrB and probably causes local melting of the DNA helix, facilitating insertion of UvrB beta-hairpin between the DNA strands. Then UvrB probes one DNA strand for the presence of a lesion. If a lesion is found the UvrA subunits dissociate and the UvrB-DNA preincision complex is formed. This complex is subsequently bound by UvrC and the second UvrB is released. If no lesion is found, the DNA wraps around the other UvrB subunit that will check the other stand for damage. The polypeptide is UvrABC system protein B (Clostridium perfringens (strain ATCC 13124 / DSM 756 / JCM 1290 / NCIMB 6125 / NCTC 8237 / Type A)).